The chain runs to 100 residues: Probable steroid-binding protein 3 (100 aa).

M1 carries the N-acetylmethionine modification. The region spanning 1–82 is the Cytochrome b5 heme-binding domain; that stretch reads MEFTAEQLSQ…LTEKEINTLN (82 aa). The segment at 1-82 is sterol-binding; sequence MEFTAEQLSQ…LTEKEINTLN (82 aa).

This sequence belongs to the cytochrome b5 family. MAPR subfamily.

The protein resides in the nucleus. The polypeptide is Probable steroid-binding protein 3 (MP3) (Arabidopsis thaliana (Mouse-ear cress)).